The primary structure comprises 143 residues: Mediator of RNA polymerase II transcription subunit 22 (143 aa).

This sequence belongs to the Mediator complex subunit 22 family. As to quaternary structure, component of the Mediator complex, which includes at least CDK8, MED4, MED6, MED11, MED14, MED17, MED18, MED20, MED21, MED22, MED27, MED28, MED30 and MED31.

The protein localises to the nucleus. Functionally, component of the Mediator complex, a coactivator involved in the regulated transcription of nearly all RNA polymerase II-dependent genes. Mediator functions as a bridge to convey information from gene-specific regulatory proteins to the basal RNA polymerase II transcription machinery. Mediator is recruited to promoters by direct interactions with regulatory proteins and serves as a scaffold for the assembly of a functional preinitiation complex with RNA polymerase II and the general transcription factors. The polypeptide is Mediator of RNA polymerase II transcription subunit 22 (MED22) (Drosophila melanogaster (Fruit fly)).